The following is a 556-amino-acid chain: Membrane protein insertase YidC (556 aa).

Residues 7–27 traverse the membrane as a helical segment; sequence ILLVALAVVAYLMVLQWNQDY. Disordered regions lie at residues 35–59 and 126–152; these read ETAQSQPAAPALPDSPSATTEGNAN and SSERTYEAQSGLIGDGPDKASGRPQYS. Low complexity predominate over residues 36–54; it reads TAQSQPAAPALPDSPSATT. 4 helical membrane-spanning segments follow: residues 365 to 385, 435 to 455, 468 to 488, and 513 to 533; these read LLGNWGWSIIVLTIVIKLAFF, LGGCLPILVQMPVFLALYWVL, FWITDLSIKDPYFILPIIMGV, and PIIFTFFFLWFPAGLVLYWVV.

The protein belongs to the OXA1/ALB3/YidC family. Type 1 subfamily. In terms of assembly, interacts with the Sec translocase complex via SecD. Specifically interacts with transmembrane segments of nascent integral membrane proteins during membrane integration.

Its subcellular location is the cell inner membrane. Functionally, required for the insertion and/or proper folding and/or complex formation of integral membrane proteins into the membrane. Involved in integration of membrane proteins that insert both dependently and independently of the Sec translocase complex, as well as at least some lipoproteins. Aids folding of multispanning membrane proteins. This Stutzerimonas stutzeri (strain A1501) (Pseudomonas stutzeri) protein is Membrane protein insertase YidC.